Reading from the N-terminus, the 262-residue chain is Diaminopimelate epimerase (262 aa).

Positions 17, 45, and 63 each coordinate substrate. The active-site Proton donor is the C72. Residues 73–74 (GN), N154, N187, and 205–206 (ER) contribute to the substrate site. Residue C214 is the Proton acceptor of the active site. 215–216 (GS) is a substrate binding site.

The protein belongs to the diaminopimelate epimerase family. Homodimer.

Its subcellular location is the cytoplasm. The catalysed reaction is (2S,6S)-2,6-diaminopimelate = meso-2,6-diaminopimelate. It participates in amino-acid biosynthesis; L-lysine biosynthesis via DAP pathway; DL-2,6-diaminopimelate from LL-2,6-diaminopimelate: step 1/1. Its function is as follows. Catalyzes the stereoinversion of LL-2,6-diaminopimelate (L,L-DAP) to meso-diaminopimelate (meso-DAP), a precursor of L-lysine and an essential component of the bacterial peptidoglycan. In Wolbachia sp. subsp. Drosophila simulans (strain wRi), this protein is Diaminopimelate epimerase.